The primary structure comprises 240 residues: GATA transcription factor 4 (240 aa).

The interval 104–124 is disordered; it reads ISFTGKPRSRRSRAPAPSVAG. Positions 109 to 116 match the Nuclear localization signal motif; the sequence is KPRSRRSR. The GATA-type zinc-finger motif lies at 154–208; it reads ADGARRCTHCASEKTPQWRTGPLGPKTLCNACGVRYKSGRLVPEYRPASSPTFVL.

This sequence belongs to the type IV zinc-finger family. Class A subfamily. In terms of tissue distribution, expressed in roots, flowers and leaves, and to a lower extent in stems.

The protein localises to the nucleus. In terms of biological role, transcriptional activator that specifically binds 5'-GATA-3' or 5'-GAT-3' motifs within gene promoters. May be involved in the regulation of some light-responsive genes. The sequence is that of GATA transcription factor 4 (GATA4) from Arabidopsis thaliana (Mouse-ear cress).